The primary structure comprises 328 residues: Lipoate--protein ligase 1 (328 aa).

The BPL/LPL catalytic domain occupies 27 to 214; sequence PAEESYFLFY…TIFGETEVEE (188 aa). ATP contacts are provided by residues arginine 69, 74–77, and lysine 131; that span reads GAVY. Lysine 131 is a binding site for (R)-lipoate.

The catalysed reaction is L-lysyl-[lipoyl-carrier protein] + (R)-lipoate + ATP = N(6)-[(R)-lipoyl]-L-lysyl-[lipoyl-carrier protein] + AMP + diphosphate + H(+). It functions in the pathway protein modification; protein lipoylation via exogenous pathway; protein N(6)-(lipoyl)lysine from lipoate: step 1/2. The protein operates within protein modification; protein lipoylation via exogenous pathway; protein N(6)-(lipoyl)lysine from lipoate: step 2/2. Its function is as follows. Catalyzes the lipoylation of proteins, such as GcvH (SAV0833) and GcvH-L (SAV0324), likely via the ATP-dependent activation of lipoate to lipoyl-AMP and the transfer of the activated lipoyl onto the lipoyl domain of the target protein. This is Lipoate--protein ligase 1 from Staphylococcus aureus (strain Mu50 / ATCC 700699).